A 336-amino-acid polypeptide reads, in one-letter code: Phospholipase A1 (336 aa).

Positions 1–27 (MEENMNLKYLLLFVYFVQVLNCCYGHG) are cleaved as a signal peptide. The propeptide occupies 28 to 36 (DPLSYELDR). A disulfide bridge connects residues Cys-40 and Cys-123. Ser-173 (nucleophile) is an active-site residue. Asp-201 acts as the Charge relay system in catalysis. Intrachain disulfides connect Cys-212-Cys-217 and Cys-255-Cys-263. His-265 (charge relay system) is an active-site residue. 3 cysteine pairs are disulfide-bonded: Cys-280/Cys-304, Cys-281/Cys-329, and Cys-297/Cys-302.

This sequence belongs to the AB hydrolase superfamily. Lipase family. In terms of tissue distribution, expressed by the venom gland.

The protein localises to the secreted. It catalyses the reaction a 1,2-diacyl-sn-glycero-3-phosphocholine + H2O = a 2-acyl-sn-glycero-3-phosphocholine + a fatty acid + H(+). Its function is as follows. Catalyzes the hydrolysis of phosphatidylcholine with phospholipase A1 activity. Induces hemolytic activity. Acts as an allergen. The chain is Phospholipase A1 from Vespula vulgaris (Yellow jacket).